Reading from the N-terminus, the 244-residue chain is tRNA pseudouridine synthase A (244 aa).

Asp52 serves as the catalytic Nucleophile. Tyr110 lines the substrate pocket.

The protein belongs to the tRNA pseudouridine synthase TruA family. As to quaternary structure, homodimer.

The catalysed reaction is uridine(38/39/40) in tRNA = pseudouridine(38/39/40) in tRNA. Its function is as follows. Formation of pseudouridine at positions 38, 39 and 40 in the anticodon stem and loop of transfer RNAs. The polypeptide is tRNA pseudouridine synthase A (Clostridium acetobutylicum (strain ATCC 824 / DSM 792 / JCM 1419 / IAM 19013 / LMG 5710 / NBRC 13948 / NRRL B-527 / VKM B-1787 / 2291 / W)).